We begin with the raw amino-acid sequence, 210 residues long: MTQPNTQTTPNDVPAAAEGQHQEQQQQQRRGGGRERRGGGRRGDRRGQERDSEWQERVVQIRRVSKTVKGGKKMSFRAIVVVGNERGQVGVGVGKAGDVIGAVRKGVADGKKHLVKVPLTRHNSIPTLSNGREGAANVLIRPAAPGTGVIAGGSIRTVLELAGIKNVLAKRLGSKTPLNNARAAMVALASLRTHKETAKERGISLEQIYS.

Residues 1 to 11 (MTQPNTQTTPN) show a composition bias toward polar residues. Residues 1–56 (MTQPNTQTTPNDVPAAAEGQHQEQQQQQRRGGGRERRGGGRRGDRRGQERDSEWQE) are disordered. The segment covering 18–29 (EGQHQEQQQQQR) has biased composition (low complexity). Over residues 32–56 (GGRERRGGGRRGDRRGQERDSEWQE) the composition is skewed to basic and acidic residues. The 64-residue stretch at 54 to 117 (WQERVVQIRR…ADGKKHLVKV (64 aa)) folds into the S5 DRBM domain.

It belongs to the universal ribosomal protein uS5 family. In terms of assembly, part of the 30S ribosomal subunit. Contacts proteins S4 and S8.

In terms of biological role, with S4 and S12 plays an important role in translational accuracy. Its function is as follows. Located at the back of the 30S subunit body where it stabilizes the conformation of the head with respect to the body. This Prochlorococcus marinus (strain MIT 9303) protein is Small ribosomal subunit protein uS5.